The chain runs to 302 residues: Mitochondrial glycine transporter (302 aa).

Solcar repeat units lie at residues 22-112 (HPVF…LKHH), 119-203 (PKPL…AKKL), and 213-297 (FSPV…MMEK). 6 helical membrane-spanning segments follow: residues 28 to 53 (FVCG…TRIQ), 87 to 113 (GVSP…KHHF), 125 to 150 (VMLG…TRYE), 178 to 201 (GLTA…TRAK), 217 to 243 (LNFS…KTHM), and 272 to 290 (GGVP…AWTV).

This sequence belongs to the mitochondrial carrier (TC 2.A.29) family. SLC25A38 subfamily.

The protein localises to the mitochondrion inner membrane. The enzyme catalyses glycine(in) = glycine(out). Functionally, mitochondrial glycine transporter that imports glycine into the mitochondrial matrix. Plays an important role in providing glycine for the first enzymatic step in heme biosynthesis, the condensation of glycine with succinyl-CoA to produce 5-aminolevulinate (ALA) in the mitochondrial matrix. Required during erythropoiesis. In terms of biological role, may play a role as pro-apoptotic protein that induces caspase-dependent apoptosis. The polypeptide is Mitochondrial glycine transporter (Xenopus laevis (African clawed frog)).